A 326-amino-acid chain; its full sequence is MPGPTQTLSPNGENNNDIIQDNGTIIPFRKHTVRGERSYSWGMAVNVYSTSITQETMSRHDIIAWVNDIVSLNYTKVEQLCSGAAYCQFMDMLFPGCISLKKVKFQAKLEHEYIHNFKLLQASFKRMNVDKVIPVEKLVKGRFQDNLDFIQWFKKFYDANYDGKEYDPVEARQGQDAIPPPDPGEQIFNLPKKSHHANSPTAGAAKSSPASKPGSTPSRPSSAKRASSSGSASRSDKDLETQVIQLNEQVHSLKLALEGVEKERDFYFGKLREIELLCQEHGQENDDLVQRLMDVLYASDEHEGHPEEPEAEEQVHEQQPQQQEEY.

At Ser-9 the chain carries Phosphoserine. In terms of domain architecture, Calponin-homology (CH) spans 56 to 158; it reads TMSRHDIIAW…FIQWFKKFYD (103 aa). A Phosphotyrosine modification is found at Tyr-166. Disordered stretches follow at residues 170–239 and 298–326; these read EARQ…DKDL and ASDE…QEEY. The segment at 186-326 is DCTN1-binding; sequence QIFNLPKKSH…EQQPQQQEEY (141 aa). Residues 199-233 show a composition bias toward low complexity; it reads SPTAGAAKSSPASKPGSTPSRPSSAKRASSSGSAS. 2 positions are modified to phosphoserine: Ser-218 and Ser-235. The region spanning 235–305 is the EB1 C-terminal domain; the sequence is SDKDLETQVI…LYASDEHEGH (71 aa). The segment at 258 to 301 is APC-binding; that stretch reads EGVEKERDFYFGKLREIELLCQEHGQENDDLVQRLMDVLYASDE. Positions 299-316 are enriched in basic and acidic residues; sequence SDEHEGHPEEPEAEEQVH. The span at 317-326 shows a compositional bias: low complexity; the sequence is EQQPQQQEEY.

Belongs to the MAPRE family. As to quaternary structure, interacts with DCTN1. Interacts with APC (via C-terminal). Interacts with monomeric and polymerized tubulin. Interacts with SLAIN1. Interacts (via the N-terminal region) with BAG1. Interacts with ASB14. Interacts with HAX1; this interaction is essential for epidermal cell migration. Phosphorylated at Ser-235 by CK2 leading to enhanced cell adhesion. Phosphorylated by CDK1 and AURKB during mitosis reduces the binding affinity of MAPRE2 for microtubules. Post-translationally, ubiquitinated in an ASB14-dependent manner; leading to proteasomal degradation.

The protein resides in the cytoplasm. It localises to the cytoskeleton. Its function is as follows. Adapter protein that is involved in microtubule polymerization, and spindle function by stabilizing microtubules and anchoring them at centrosomes. Therefore, ensures mitotic progression and genome stability. Acts as a central regulator of microtubule reorganization in apico-basal epithelial differentiation. Plays a role during oocyte meiosis by regulating microtubule dynamics. Participates in neurite growth by interacting with plexin B3/PLXNB3 and microtubule reorganization during apico-basal epithelial differentiation. Also plays an essential role for cell migration and focal adhesion dynamics. Mechanistically, recruits HAX1 to microtubules in order to regulate focal adhesion dynamics. The sequence is that of Microtubule-associated protein RP/EB family member 2 (MAPRE2) from Bos taurus (Bovine).